The primary structure comprises 472 residues: Meiotic spindle formation protein mei-1 (472 aa).

Residues 83–161 form a disordered region; it reads HEAMTRQSGS…TQGILPQNSA (79 aa). Position 92 is a phosphoserine; by mbk-2 (S92). Polar residues-rich tracts occupy residues 134–143 and 150–161; these read KSTSSMSTNP and NPTQGILPQNSA. Residues 233–240 and 351–352 contribute to the ATP site; these read GPPGTGKT and RR.

The protein belongs to the AAA ATPase family. Katanin p60 subunit A1 subfamily. In terms of assembly, homohexamer; ATP hydrolysis initiates a cycle between an open spiral and a closed ring conformation which is probably involved in pulling tubulin dimers out from microtubules. Interacts with mei-2, which may serve as a targeting subunit. Interacts with mel-26, which targets mei-1 for ubiquitin mediated proteolysis. Interacts with phosphatase pph-4.1. Phosphorylated. Phosphorylation by mbk-2 is required for its rapid degradation following meiosis II. Likely dephosphorylated by the PP4 complex composed of catalytic subunit pph-4.1 and regulatory subunit ppfr-1. Post-translationally, polyubiquitination targets the protein for rapid degradation via the ubiquitin system at the end of meiosis. The BTB domain protein mel-26 may serve to specifically target mei-1 for ubiquitination by cul-3 containing complexes. The cul-3 protein is in turn regulated by neddylation by ned-8.

It is found in the cytoplasm. The protein resides in the cytoskeleton. Its subcellular location is the spindle pole. The protein localises to the chromosome. The catalysed reaction is n ATP + n H2O + a microtubule = n ADP + n phosphate + (n+1) alpha/beta tubulin heterodimers.. ATPase activity is stimulated by microtubules, which promote homooligomerization. ATP-dependent microtubule severing is stimulated by interaction with mei-2. In terms of biological role, catalytic subunit of a complex which severs microtubules in an ATP-dependent manner. Microtubule severing may promote rapid reorganization of cellular microtubule arrays. Required specifically for meiotic spindle formation in the female germline; the presence of this protein is inimical to the formation of mitotic spindles. In body wall muscles, regulates organization of myosin thick filaments. This chain is Meiotic spindle formation protein mei-1, found in Caenorhabditis elegans.